Reading from the N-terminus, the 116-residue chain is Large ribosomal subunit protein uL18 (116 aa).

This sequence belongs to the universal ribosomal protein uL18 family. As to quaternary structure, part of the 50S ribosomal subunit; part of the 5S rRNA/L5/L18/L25 subcomplex. Contacts the 5S and 23S rRNAs.

This is one of the proteins that bind and probably mediate the attachment of the 5S RNA into the large ribosomal subunit, where it forms part of the central protuberance. This chain is Large ribosomal subunit protein uL18, found in Cellvibrio japonicus (strain Ueda107) (Pseudomonas fluorescens subsp. cellulosa).